We begin with the raw amino-acid sequence, 83 residues long: Translational regulator CsrA (83 aa).

The protein belongs to the CsrA/RsmA family. As to quaternary structure, homodimer; the beta-strands of each monomer intercalate to form a hydrophobic core, while the alpha-helices form wings that extend away from the core.

Its subcellular location is the cytoplasm. Functionally, a translational regulator that binds mRNA to regulate translation initiation and/or mRNA stability. Usually binds in the 5'-UTR at or near the Shine-Dalgarno sequence preventing ribosome-binding, thus repressing translation. Its main target seems to be the major flagellin gene, while its function is anatagonized by FliW. The polypeptide is Translational regulator CsrA (Thermotoga maritima (strain ATCC 43589 / DSM 3109 / JCM 10099 / NBRC 100826 / MSB8)).